The primary structure comprises 166 residues: Small ribosomal subunit protein uS4 (166 aa).

The S4 RNA-binding domain maps to R103–Q165.

Belongs to the universal ribosomal protein uS4 family. In terms of assembly, part of the 30S ribosomal subunit. Contacts protein S5. The interaction surface between S4 and S5 is involved in control of translational fidelity.

One of the primary rRNA binding proteins, it binds directly to 16S rRNA where it nucleates assembly of the body of the 30S subunit. In terms of biological role, with S5 and S12 plays an important role in translational accuracy. In Ignicoccus hospitalis (strain KIN4/I / DSM 18386 / JCM 14125), this protein is Small ribosomal subunit protein uS4.